The chain runs to 359 residues: MKSFVLLFCLAQLWGCHSIPLDPVAGYKEPACDDPDTEQAALAAVDYINKHLPRGYKHTLNQIDSVKVWPRRPTGEVYDIEIDTLETTCHVLDPTPLANCSVRQQTQHAVEGDCDIHVLKQDGQFSVLFTKCDSSPDSAEDVRKLCPDCPLLAPLNDSRVVHAVEVALATFNAESNGSYLQLVEISRAQFVPLPVSVSVEFAVAATDCIAKEVVDPTKCNLLAEKQYGFCKGSVIQKALGGEDVRVTCTLFQTQPVIPQPQPDGAEAEAPSAVPDAAGPTPSAAGPPVASVVVGPSVVAVPLPLHRAHYDLRHTFSGVASVESSSGEAFHVGKTPIVGQPSIPGGPVRLCPGRIRYFKI.

The N-terminal stretch at 1–18 (MKSFVLLFCLAQLWGCHS) is a signal peptide. The Cystatin fetuin-A-type 1 domain occupies 27 to 133 (YKEPACDDPD…QFSVLFTKCD (107 aa)). 6 disulfides stabilise this stretch: Cys32–Cys350, Cys89–Cys100, Cys114–Cys132, Cys146–Cys149, Cys208–Cys219, and Cys230–Cys248. Asn99 carries an N-linked (GlcNAc...) asparagine glycan. Phosphoserine occurs at positions 134, 135, and 138. The Cystatin fetuin-A-type 2 domain occupies 144–256 (KLCPDCPLLA…TCTLFQTQPV (113 aa)). N-linked (GlcNAc...) asparagine glycans are attached at residues Asn156 and Asn176. A disordered region spans residues 257–285 (IPQPQPDGAEAEAPSAVPDAAGPTPSAAG). The O-linked (GalNAc...) serine glycan is linked to Ser271. Positions 276 to 285 (AAGPTPSAAG) are enriched in low complexity. O-linked (GalNAc...) threonine glycosylation is present at Thr280. Residues Ser282 and Ser296 are each glycosylated (O-linked (GalNAc...) serine). Position 314 is a phosphothreonine (Thr314). Ser316, Ser320, Ser323, and Ser325 each carry phosphoserine. O-linked (GalNAc...) threonine glycosylation occurs at Thr334. A glycan (O-linked (GalNAc...) serine; partial) is linked at Ser341.

It belongs to the fetuin family. Post-translationally, phosphorylated by FAM20C in the extracellular medium. In terms of tissue distribution, liver and bone.

Its subcellular location is the secreted. In terms of biological role, promotes endocytosis, possesses opsonic properties and influences the mineral phase of bone. Suggested to have lymphocyte stimulating properties, lipid binding capability and to bind thyroid hormone. This chain is Alpha-2-HS-glycoprotein (AHSG), found in Bos taurus (Bovine).